The chain runs to 98 residues: uncharacterized protein (98 aa).

Positions 1-63 are disordered; the sequence is MPRDKKLVHR…NGHSQPAIVA (63 aa). Positions 14–29 are enriched in acidic residues; that stretch reads DVEDEDNDQREEEWSD. Residues 48–57 show a composition bias toward polar residues; it reads EPSSASNGHS.

This is an uncharacterized protein from Aedes vexans (Inland floodwater mosquito).